Reading from the N-terminus, the 143-residue chain is Large ribosomal subunit protein uL11 (143 aa).

Belongs to the universal ribosomal protein uL11 family. Part of the ribosomal stalk of the 50S ribosomal subunit. Interacts with L10 and the large rRNA to form the base of the stalk. L10 forms an elongated spine to which L12 dimers bind in a sequential fashion forming a multimeric L10(L12)X complex. In terms of processing, one or more lysine residues are methylated.

Forms part of the ribosomal stalk which helps the ribosome interact with GTP-bound translation factors. The protein is Large ribosomal subunit protein uL11 of Thiobacillus denitrificans (strain ATCC 25259 / T1).